We begin with the raw amino-acid sequence, 674 residues long: Polyunsaturated fatty acid 5-lipoxygenase (674 aa).

One can recognise a PLAT domain in the interval 2-118 (PSYTVTVATG…EVVLRDGRAK (117 aa)). Positions 17, 18, 19, 44, 45, 47, 79, and 80 each coordinate Ca(2+). Residues 119–674 (LARDDQIHIL…PDRIPNSVAI (556 aa)) enclose the Lipoxygenase domain. At Ser-272 the chain carries Phosphoserine; by MAPKAPK2. His-368 and His-373 together coordinate Fe cation. Ser-524 bears the Phosphoserine; by PKA mark. Fe cation-binding residues include His-551, Asn-555, and Ile-674.

It belongs to the lipoxygenase family. As to quaternary structure, homodimer. Interacts with ALOX5AP and LTC4S. Interacts with COTL1, the interaction is required for stability and efficient catalytic activity. Interacts with PIK3R1; this interaction bridges ALOX5 with CD40 after CD40 ligation in B cells and leads to the production of reactive oxygen species (ROS). Interacts (via PLAT domain) with DICER1 (via Dicer dsRNA-binding fold domain); this interaction enhances arachidonate 5-lipoxygenase activity and modifies the miRNA precursor processing activity of DICER1. Fe cation is required as a cofactor. Serine phosphorylation by MAPKAPK2 is stimulated by arachidonic acid. Phosphorylation on Ser-524 by PKA has an inhibitory effect. Phosphorylation on Ser-272 prevents export from the nucleus. Phosphorylation at Ser-524 is stimulated by 8-bromo-3',5'-cyclic AMP or prostaglandin E2.

Its subcellular location is the cytoplasm. The protein localises to the nucleus matrix. It is found in the nucleus membrane. The protein resides in the perinuclear region. It localises to the cytosol. Its subcellular location is the nucleus envelope. The protein localises to the nucleus intermembrane space. It catalyses the reaction (5Z,8Z,11Z,14Z)-eicosatetraenoate + O2 = leukotriene A4 + H2O. The enzyme catalyses 18-HEPE + O2 = (5S)-hydroperoxy-18-hydroxy-(7E,9E,11Z,14Z,16E)-eicosapentaenoate. The catalysed reaction is (18R)-hydroxy-(5Z,8Z,11Z,14Z,16E)-eicosapentaenoate + O2 = (5S)-hydroperoxy-(18R)-hydroxy-(6E,8Z,11Z,14Z,16E)-eicosapentaenoate. It carries out the reaction (18S)-hydroxy-(5Z,8Z,11Z,14Z,16E)-eicosapentaenoate + O2 = (5S)-hydroperoxy-(18S)-hydroxy-(6E,8Z,11Z,14Z,16E)-eicosapentaenoate. It catalyses the reaction (5S)-hydroperoxy-(18S)-hydroxy-(6E,8Z,11Z,14Z,16E)-eicosapentaenoate = (5S,6S)-epoxy-(18S)-hydroxy-(7E,9E,11Z,14Z,16E)-eicosapentaenoate + H2O. The enzyme catalyses (5S)-hydroperoxy-(18R)-hydroxy-(6E,8Z,11Z,14Z,16E)-eicosapentaenoate = (5S,6S)-epoxy-(18R)-hydroxy-(7E,9E,11Z,14Z,16E)-eicosapentaenoate + H2O. The catalysed reaction is (5S)-hydroperoxy-18-hydroxy-(7E,9E,11Z,14Z,16E)-eicosapentaenoate = (5S,6S)-epoxy-18-hydroxy-(7E,9E,11Z,14Z,16E)-eicosapentaenoate + H2O. It carries out the reaction (5Z,8Z,11Z,14Z)-eicosatetraenoate + O2 = (5S)-hydroperoxy-(6E,8Z,11Z,14Z)-eicosatetraenoate. It catalyses the reaction (15S)-hydroxy-(5Z,8Z,11Z,13E)-eicosatetraenoate + O2 = (5S)-hydroperoxy-(15S)-hydroxy-(6E,8Z,11Z,13E)-eicosatetraenoate. The enzyme catalyses (5S)-hydroperoxy-(6E,8Z,11Z,14Z)-eicosatetraenoate = leukotriene A4 + H2O. The catalysed reaction is (5Z,8Z,11Z,14Z)-eicosatetraenoate + O2 = (8S)-hydroperoxy-(5Z,9E,11Z,14Z)-eicosatetraenoate. It carries out the reaction (5Z,8Z,11Z,14Z)-eicosatetraenoate + O2 = (12S)-hydroperoxy-(5Z,8Z,10E,14Z)-eicosatetraenoate. It catalyses the reaction (5Z,8Z)-eicosadienoate + O2 = (5S)-hydroperoxy-(6E,8Z)-eicosadienoate. The enzyme catalyses (12S)-hydroxy-(5Z,8Z,10E,14Z)-eicosatetraenoate + O2 = (5S)-hydroperoxy-(12S)-hydroxy-(6E,8Z,10E,14Z)-eicosatetraenoate. The catalysed reaction is (5Z,8Z,11Z,14Z,17Z)-eicosapentaenoate + O2 = 5-hydroperoxy-(6E,8Z,11Z,14Z,17Z)-eicosapentaenoate. It carries out the reaction (4Z,7Z,10Z,13Z,16Z,19Z)-docosahexaenoate + O2 = (14S)-hydroperoxy-(4Z,7Z,10Z,12E,16Z,19Z)-docosahexaenoate. It catalyses the reaction (4Z,7Z,10Z,13Z,16Z,19Z)-docosahexaenoate + O2 = (7S)-hydroperoxy-(4Z,8E,10Z,13Z,16Z,19Z)-docosahexaenoate. The enzyme catalyses (4Z,7Z,10Z,13Z,16Z,19Z)-docosahexaenoate + O2 = (17S)-hydroperoxy-(4Z,7Z,10Z,13Z,15E,19Z)-docosahexaenoate. It participates in lipid metabolism; leukotriene A4 biosynthesis. Undergoes a sequential loss of the oxygenase and pseudoperoxidase activities which is dependent on the structural characteristics of the substrate for the reaction, on oxygen concentration and on exposure to phospholipids and calcium. 15-HETE and other 15-mono-hydroxyeicosanoids exhibit the highest inhibitory potencies in their capability of suppressing 5-lipoxygenation of arachidonic acid, whereas the other HETEs, (5S,15S)-dihydroxy-(6E,8Z,11Z,13E)-eicosatetraenoic acid (5,15-diHETE) as well as octadecanoids, are modest or poor inhibitors. The formation of (5S)-hydroperoxy-(15S)-hydroxy-(6E,8Z,11Z,13E)-eicosatetraenoate is strongly stimulated by either hydroperoxypolyenoic fatty acids or arachidonic acid. Arachidonate 5-lipoxygenase and leukotriene A4 synthase activities are allosterically increased by ATP. Its function is as follows. Catalyzes the oxygenation of arachidonate ((5Z,8Z,11Z,14Z)-eicosatetraenoate) to 5-hydroperoxyeicosatetraenoate (5-HPETE) followed by the dehydration to 5,6- epoxyeicosatetraenoate (Leukotriene A4/LTA4), the first two steps in the biosynthesis of leukotrienes, which are potent mediators of inflammation. Also catalyzes the oxygenation of arachidonate into 8-hydroperoxyicosatetraenoate (8-HPETE) and 12-hydroperoxyicosatetraenoate (12-HPETE). Displays lipoxin synthase activity being able to convert (15S)-HETE into a conjugate tetraene. Although arachidonate is the preferred substrate, this enzyme can also metabolize oxidized fatty acids derived from arachidonate such as (15S)-HETE, eicosapentaenoate (EPA) such as (18R)- and (18S)-HEPE or docosahexaenoate (DHA) which lead to the formation of specialized pro-resolving mediators (SPM) lipoxin and resolvins E and D respectively, therefore it participates in anti-inflammatory responses. Oxidation of DHA directly inhibits endothelial cell proliferation and sprouting angiogenesis via peroxisome proliferator-activated receptor gamma (PPARgamma). It does not catalyze the oxygenation of linoleic acid and does not convert (5S)-HETE to lipoxin isomers. In addition to inflammatory processes, it participates in dendritic cell migration, wound healing through an antioxidant mechanism based on heme oxygenase-1 (HO-1) regulation expression, monocyte adhesion to the endothelium via ITGAM expression on monocytes. Moreover, it helps establish an adaptive humoral immunity by regulating primary resting B cells and follicular helper T cells and participates in the CD40-induced production of reactive oxygen species (ROS) after CD40 ligation in B cells through interaction with PIK3R1 that bridges ALOX5 with CD40. May also play a role in glucose homeostasis, regulation of insulin secretion and palmitic acid-induced insulin resistance via AMPK. Can regulate bone mineralization and fat cell differentiation increases in induced pluripotent stem cells. This is Polyunsaturated fatty acid 5-lipoxygenase from Homo sapiens (Human).